We begin with the raw amino-acid sequence, 185 residues long: GTP cyclohydrolase 1 (185 aa).

Cys-75, His-78, and Cys-146 together coordinate Zn(2+).

It belongs to the GTP cyclohydrolase I family. Homomer.

The enzyme catalyses GTP + H2O = 7,8-dihydroneopterin 3'-triphosphate + formate + H(+). The protein operates within cofactor biosynthesis; 7,8-dihydroneopterin triphosphate biosynthesis; 7,8-dihydroneopterin triphosphate from GTP: step 1/1. This Clostridium kluyveri (strain NBRC 12016) protein is GTP cyclohydrolase 1.